A 76-amino-acid polypeptide reads, in one-letter code: DNA-directed RNA polymerase subunit epsilon (76 aa).

Belongs to the RNA polymerase subunit epsilon family. RNAP is composed of a core of 2 alpha, a beta and a beta' subunit. The core is associated with a delta subunit, and at least one of epsilon or omega. When a sigma factor is associated with the core the holoenzyme is formed, which can initiate transcription.

It carries out the reaction RNA(n) + a ribonucleoside 5'-triphosphate = RNA(n+1) + diphosphate. In terms of biological role, a non-essential component of RNA polymerase (RNAP). The polypeptide is DNA-directed RNA polymerase subunit epsilon (Streptococcus sanguinis (strain SK36)).